A 289-amino-acid polypeptide reads, in one-letter code: Probable endonuclease 4 (289 aa).

Zn(2+)-binding residues include histidine 76, histidine 116, glutamate 152, aspartate 186, histidine 189, histidine 220, aspartate 233, histidine 235, and glutamate 265.

This sequence belongs to the AP endonuclease 2 family. It depends on Zn(2+) as a cofactor.

It carries out the reaction Endonucleolytic cleavage to 5'-phosphooligonucleotide end-products.. In terms of biological role, endonuclease IV plays a role in DNA repair. It cleaves phosphodiester bonds at apurinic or apyrimidinic (AP) sites, generating a 3'-hydroxyl group and a 5'-terminal sugar phosphate. This is Probable endonuclease 4 from Malacoplasma penetrans (strain HF-2) (Mycoplasma penetrans).